Here is a 38-residue protein sequence, read N- to C-terminus: Large ribosomal subunit protein bL36 (38 aa).

Belongs to the bacterial ribosomal protein bL36 family.

This Cupriavidus metallidurans (strain ATCC 43123 / DSM 2839 / NBRC 102507 / CH34) (Ralstonia metallidurans) protein is Large ribosomal subunit protein bL36.